Consider the following 206-residue polypeptide: Protein DEHYDRATION-INDUCED 19 (206 aa).

Thr105 carries the phosphothreonine modification. The residue at position 107 (Ser107) is a Phosphoserine. The interval Ser142–Gln167 is disordered. A compositionally biased stretch (polar residues) spans Ser143–Asn161.

Belongs to the Di19 family. Interacts with ADO2/LKP2, CPK11 and CPK4. Weak interaction with CPK12 and no interactions with CPK1, CPK5 or CPK26. Post-translationally, phosphorylated within the NLS/NES region. In terms of tissue distribution, expressed in seedlings, roots, leaves, stems, flowers and siliques.

The protein localises to the nucleus. This Arabidopsis thaliana (Mouse-ear cress) protein is Protein DEHYDRATION-INDUCED 19 (DI19-1).